Here is an 83-residue protein sequence, read N- to C-terminus: High-potential iron-sulfur protein (83 aa).

Positions 43, 46, 61, and 75 each coordinate [4Fe-4S] cluster.

Belongs to the high-potential iron-sulfur protein (HiPIP) family. In terms of assembly, homodimer.

It localises to the periplasm. In terms of biological role, specific class of high-redox-potential 4Fe-4S ferredoxins. Functions in anaerobic electron transport in most purple and in some other photosynthetic bacteria and in at least one genus (Paracoccus) of halophilic, denitrifying bacteria. In Isochromatium buderi (Chromatium buderi), this protein is High-potential iron-sulfur protein.